A 161-amino-acid chain; its full sequence is Ribosome maturation factor RimP (161 aa).

Belongs to the RimP family.

The protein localises to the cytoplasm. Functionally, required for maturation of 30S ribosomal subunits. This is Ribosome maturation factor RimP from Rickettsia africae (strain ESF-5).